The sequence spans 695 residues: Elongation factor G 1 (695 aa).

Residues Ser-6–Thr-284 enclose the tr-type G domain. GTP is bound by residues Ala-15–Thr-22, Asp-82–His-86, and Asn-136–Asp-139.

Belongs to the TRAFAC class translation factor GTPase superfamily. Classic translation factor GTPase family. EF-G/EF-2 subfamily.

It localises to the cytoplasm. In terms of biological role, catalyzes the GTP-dependent ribosomal translocation step during translation elongation. During this step, the ribosome changes from the pre-translocational (PRE) to the post-translocational (POST) state as the newly formed A-site-bound peptidyl-tRNA and P-site-bound deacylated tRNA move to the P and E sites, respectively. Catalyzes the coordinated movement of the two tRNA molecules, the mRNA and conformational changes in the ribosome. This chain is Elongation factor G 1, found in Desulfotalea psychrophila (strain LSv54 / DSM 12343).